The primary structure comprises 304 residues: Probable casein kinase I homolog ECU03_0910 (304 aa).

The Protein kinase domain maps to isoleucine 8–leucine 304. Residues isoleucine 14–isoleucine 22 and lysine 37 contribute to the ATP site. Aspartate 129 functions as the Proton acceptor in the catalytic mechanism.

This sequence belongs to the protein kinase superfamily. CK1 Ser/Thr protein kinase family. Casein kinase I subfamily.

It localises to the nucleus. The enzyme catalyses L-seryl-[protein] + ATP = O-phospho-L-seryl-[protein] + ADP + H(+). It catalyses the reaction L-threonyl-[protein] + ATP = O-phospho-L-threonyl-[protein] + ADP + H(+). Involved in DNA repair. May regulate the activity of protein(s) involved in double strand break repair caused by gamma rays. The chain is Probable casein kinase I homolog ECU03_0910 from Encephalitozoon cuniculi (strain GB-M1) (Microsporidian parasite).